The sequence spans 37 residues: Large ribosomal subunit protein bL36 (37 aa).

The protein belongs to the bacterial ribosomal protein bL36 family.

In Cutibacterium acnes (strain DSM 16379 / KPA171202) (Propionibacterium acnes), this protein is Large ribosomal subunit protein bL36.